The primary structure comprises 607 residues: Elongation factor 4 (607 aa).

The region spanning 11–193 (GKIRNFSIIA…QIVEKVPAPT (183 aa)) is the tr-type G domain. GTP is bound by residues 23 to 28 (DHGKST) and 140 to 143 (NKID).

This sequence belongs to the TRAFAC class translation factor GTPase superfamily. Classic translation factor GTPase family. LepA subfamily.

It is found in the cell membrane. The enzyme catalyses GTP + H2O = GDP + phosphate + H(+). In terms of biological role, required for accurate and efficient protein synthesis under certain stress conditions. May act as a fidelity factor of the translation reaction, by catalyzing a one-codon backward translocation of tRNAs on improperly translocated ribosomes. Back-translocation proceeds from a post-translocation (POST) complex to a pre-translocation (PRE) complex, thus giving elongation factor G a second chance to translocate the tRNAs correctly. Binds to ribosomes in a GTP-dependent manner. This chain is Elongation factor 4, found in Streptococcus pneumoniae (strain JJA).